The sequence spans 144 residues: Large ribosomal subunit protein uL15 (144 aa).

Over residues 1–14 the composition is skewed to basic and acidic residues; sequence MKLHELKPNEGARD. Residues 1-43 form a disordered region; that stretch reads MKLHELKPNEGARDVRKRVGRGTSSGTGKTAGRGQKGQKARSK. Residues 23 to 35 show a composition bias toward gly residues; the sequence is TSSGTGKTAGRGQ.

Belongs to the universal ribosomal protein uL15 family. As to quaternary structure, part of the 50S ribosomal subunit.

In terms of biological role, binds to the 23S rRNA. The protein is Large ribosomal subunit protein uL15 of Latilactobacillus sakei subsp. sakei (strain 23K) (Lactobacillus sakei subsp. sakei).